The following is a 1210-amino-acid chain: Epidermal growth factor receptor (1210 aa).

An N-terminal signal peptide occupies residues 1-24; sequence MRPSGTARTTLLVLLTALCAAGGA. At 25-647 the chain is on the extracellular side; that stretch reads LEEKKVCQGT…VWPSGPKIPS (623 aa). An intrachain disulfide couples Cys-31 to Cys-58. Residues 75–300 form an Approximate repeat; sequence DLSFLKTIQE…CVKKCPRNYV (226 aa). Asn-128, Asn-175, and Asn-196 each carry an N-linked (GlcNAc...) asparagine glycan. 13 disulfides stabilise this stretch: Cys-157–Cys-187, Cys-190–Cys-199, Cys-194–Cys-207, Cys-215–Cys-223, Cys-219–Cys-231, Cys-232–Cys-240, Cys-236–Cys-248, Cys-251–Cys-260, Cys-264–Cys-291, Cys-295–Cys-307, Cys-311–Cys-326, Cys-329–Cys-333, and Cys-337–Cys-362. Ser-229 carries the post-translational modification Phosphoserine. Asn-352, Asn-413, and Asn-444 each carry an N-linked (GlcNAc...) asparagine glycan. Residues 390-600 form an Approximate repeat; the sequence is RELEILKTVK…CVKTCPAGIM (211 aa). Cystine bridges form between Cys-470–Cys-499, Cys-506–Cys-515, Cys-510–Cys-523, Cys-526–Cys-535, Cys-539–Cys-555, Cys-558–Cys-571, Cys-562–Cys-579, Cys-582–Cys-591, Cys-595–Cys-617, Cys-620–Cys-628, and Cys-624–Cys-636. N-linked (GlcNAc...) asparagine glycosylation occurs at Asn-528. A glycan (N-linked (GlcNAc...) asparagine) is linked at Asn-568. Asn-603 and Asn-623 each carry an N-linked (GlcNAc...) asparagine glycan. The helical transmembrane segment at 648 to 670 threads the bilayer; the sequence is IATGIVGGLLFIVVVALGIGLFM. Over 671–1210 the chain is Cytoplasmic; sequence RRRHIVRKRT…APPSSEFIGA (540 aa). Residue Thr-680 is modified to Phosphothreonine; by PKC and PKD/PRKD1. The tract at residues 690–706 is important for dimerization, phosphorylation and activation; the sequence is LVEPLTPSGEAPNQAHL. Thr-695 is subject to Phosphothreonine; by PKD/PRKD1. Ser-697 bears the Phosphoserine mark. Residues 714 to 981 enclose the Protein kinase domain; sequence FKKIKVLGSG…KMARDPQRYL (268 aa). Lys-718 is covalently cross-linked (Glycyl lysine isopeptide (Lys-Gly) (interchain with G-Cter in ubiquitin)). An ATP-binding site is contributed by 720–728; sequence LGSGAFGTV. Lys-739 participates in a covalent cross-link: Glycyl lysine isopeptide (Lys-Gly) (interchain with G-Cter in ubiquitin). Lys-747 is a binding site for ATP. N6-(2-hydroxyisobutyryl)lysine is present on Lys-747. Glycyl lysine isopeptide (Lys-Gly) (interchain with G-Cter in ubiquitin) cross-links involve residues Lys-756 and Lys-759. 792-793 serves as a coordination point for ATP; sequence TQ. Asp-839 acts as the Proton acceptor in catalysis. Residue Asp-857 participates in ATP binding. Lys-869 is covalently cross-linked (Glycyl lysine isopeptide (Lys-Gly) (interchain with G-Cter in ubiquitin)). Position 871 is a phosphotyrosine (Tyr-871). Residues Lys-931, Lys-962, and Lys-972 each participate in a glycyl lysine isopeptide (Lys-Gly) (interchain with G-Cter in ubiquitin) cross-link. Residues Ser-993 and Ser-997 each carry the phosphoserine modification. Phosphotyrosine; by autocatalysis is present on residues Tyr-1000 and Tyr-1018. 2 positions are modified to phosphoserine: Ser-1028 and Ser-1041. Thr-1043 carries the post-translational modification Phosphothreonine. At Ser-1044 the chain carries Phosphoserine. A lipid anchor (S-palmitoyl cysteine) is attached at Cys-1051. Tyr-1069 carries the phosphotyrosine modification. Phosphoserine is present on residues Ser-1070 and Ser-1071. Tyr-1092 and Tyr-1110 each carry phosphotyrosine; by autocatalysis. Positions 1113 to 1137 are disordered; it reads QPLHPAPGRDLHYQNPHSNAVGNPE. Polar residues predominate over residues 1127–1137; it reads NPHSNAVGNPE. Cys-1146 carries S-palmitoyl cysteine lipidation. Position 1166 is a phosphoserine (Ser-1166). At Tyr-1172 the chain carries Phosphotyrosine; by autocatalysis. At Tyr-1197 the chain carries Phosphotyrosine. An Omega-N-methylarginine modification is found at Arg-1199.

Belongs to the protein kinase superfamily. Tyr protein kinase family. EGF receptor subfamily. As to quaternary structure, binding of the ligand triggers homo- and/or heterodimerization of the receptor triggering its autophosphorylation. Heterodimer with ERBB2. Forms a complex with CCDC88A/GIV (via SH2-like region) and GNAI3 which leads to enhanced EGFR signaling and triggering of cell migration; binding of CCDC88A requires autophosphorylation of the EGFR C-terminal region, and ligand stimulation is required for recruitment of GNAI3 to the complex. Interacts with ERRFI1; inhibits dimerization of the kinase domain and autophosphorylation. Part of a complex with ERBB2 and either PIK3C2A or PIK3C2B. Interacts with GRB2; an adapter protein coupling the receptor to downstream signaling pathways. Interacts with GAB2; involved in signaling downstream of EGFR. Interacts with STAT3; mediates EGFR downstream signaling in cell proliferation. Interacts with RIPK1; involved in NF-kappa-B activation. Interacts (autophosphorylated) with CBL, CBLB and CBLC; involved in EGFR ubiquitination and regulation; interaction with CBL is reduced in the presence of tensin TNS4. Interacts with SOCS5; regulates EGFR degradation through ELOC- and ELOB-mediated ubiquitination and proteasomal degradation. Interacts with PRMT5; methylates EGFR and enhances interaction with PTPN6. Interacts (phosphorylated) with PTPN6; inhibits EGFR-dependent activation of MAPK/ERK. Interacts with COPG1; essential for regulation of EGF-dependent nuclear transport of EGFR by retrograde trafficking from the Golgi to the ER. Interacts with TNK2; this interaction is dependent on EGF stimulation and kinase activity of EGFR. Interacts with PCNA; positively regulates PCNA. Interacts with PELP1. Interacts with MUC1. Interacts with AP2M1. Interacts with FER. Interacts (via SH2 domains) with GRB2, NCK1 and NCK2. Interacts with EPS8; mediates EPS8 phosphorylation. Interacts with ATXN2. Interacts with GAREM1. Interacts (ubiquitinated) with ANKRD13A/B/D; the interaction is direct and may regulate EGFR internalization after EGF stimulation. Interacts with GPER1; the interaction occurs in an estrogen-dependent manner. Interacts (via C-terminal cytoplasmic kinase domain) with ZPR1 (via zinc fingers). Interacts with RNF115 and RNF126. Interacts with GPRC5A (via its transmembrane domain). Interacts with FAM83B; positively regulates EGFR inducing its autophosphorylation in absence of stimulation by EGF. Interacts with LAPTM4B; positively correlates with EGFR activation. Interacts with STX19. Interacts with CD44. Interacts with PGRMC1; the interaction requires PGRMC1 homodimerization. Interacts with PIKFYVE. Interacts with NEU3. Interacts with TRAF4. Interacts with the ant venom OMEGA-myrmeciitoxin(02)-Mg1a. Interacts with CD82; this interaction facilitates ligand-induced endocytosis of the receptor and its subsequent desensitization. In terms of processing, monoubiquitinated and polyubiquitinated upon EGF stimulation; which does not affect tyrosine kinase activity or signaling capacity but may play a role in lysosomal targeting. Polyubiquitin linkage is mainly through 'Lys-63', but linkage through 'Lys-48', 'Lys-11' and 'Lys-29' also occurs. Deubiquitinated by OTUD7B, preventing degradation. Ubiquitinated by RNF115 and RNF126. Ubiquitinated by ZNRF1 or CBL at different lysines in response to EGF stimulation; leading to recruitment of the ESCRT machinery and subsequent degradation in the lysosomes. Deubiquitinated by UCHL1 leading to the inhibition of its degradation. Phosphorylated on Tyr residues in response to EGF. Phosphorylation at Ser-697 is partial and occurs only if Thr-695 is phosphorylated. Phosphorylation at Thr-680 and Thr-695 by PRKD1 inhibits EGF-induced MAPK8/JNK1 activation. Dephosphorylation by PTPRJ prevents endocytosis and stabilizes the receptor at the plasma membrane. Autophosphorylation at Tyr-1199 is stimulated by methylation at Arg-1199 and enhances interaction with PTPN6. Autophosphorylation at Tyr-1092 and/or Tyr-1110 recruits STAT3. Dephosphorylated by PTPN1 and PTPN2. Post-translationally, palmitoylated on Cys residues by ZDHHC20. Palmitoylation inhibits internalization after ligand binding, and increases the persistence of tyrosine-phosphorylated EGFR at the cell membrane. Palmitoylation increases the amplitude and duration of EGFR signaling. In terms of processing, methylated. Methylation at Arg-1199 by PRMT5 stimulates phosphorylation at Tyr-1197.

The protein resides in the cell membrane. It localises to the endoplasmic reticulum membrane. The protein localises to the golgi apparatus membrane. It is found in the nucleus membrane. Its subcellular location is the endosome. The protein resides in the endosome membrane. It localises to the nucleus. It catalyses the reaction L-tyrosyl-[protein] + ATP = O-phospho-L-tyrosyl-[protein] + ADP + H(+). With respect to regulation, endocytosis and inhibition of the activated EGFR by phosphatases like PTPRJ and PTPRK constitute immediate regulatory mechanisms. Upon EGF-binding phosphorylates EPS15 that regulates EGFR endocytosis and activity. Moreover, inducible feedback inhibitors including LRIG1, SOCS4, SOCS5 and ERRFI1 constitute alternative regulatory mechanisms for the EGFR signaling. Receptor tyrosine kinase binding ligands of the EGF family and activating several signaling cascades to convert extracellular cues into appropriate cellular responses. Known ligands include EGF, TGFA/TGF-alpha, AREG, epigen/EPGN, BTC/betacellulin, epiregulin/EREG and HBEGF/heparin-binding EGF. Ligand binding triggers receptor homo- and/or heterodimerization and autophosphorylation on key cytoplasmic residues. The phosphorylated receptor recruits adapter proteins like GRB2 which in turn activates complex downstream signaling cascades. Activates at least 4 major downstream signaling cascades including the RAS-RAF-MEK-ERK, PI3 kinase-AKT, PLCgamma-PKC and STATs modules. May also activate the NF-kappa-B signaling cascade. Also directly phosphorylates other proteins like RGS16, activating its GTPase activity and probably coupling the EGF receptor signaling to the G protein-coupled receptor signaling. Also phosphorylates MUC1 and increases its interaction with SRC and CTNNB1/beta-catenin. Positively regulates cell migration via interaction with CCDC88A/GIV which retains EGFR at the cell membrane following ligand stimulation, promoting EGFR signaling which triggers cell migration. Plays a role in enhancing learning and memory performance. Plays a role in mammalian pain signaling (long-lasting hypersensitivity). This Mus musculus (Mouse) protein is Epidermal growth factor receptor.